Reading from the N-terminus, the 129-residue chain is uncharacterized protein (129 aa).

To M.pneumoniae MPN_376 N-terminal region.

This is an uncharacterized protein from Mycoplasma pneumoniae (strain ATCC 29342 / M129 / Subtype 1) (Mycoplasmoides pneumoniae).